The chain runs to 736 residues: MISMIINKAIDLGQGKIISIETGKMAKQADGSVVVRLGDTMVLATVVSSKKTPPPNQDYFPLQVEYREKYSAAGKFPGGFFKRESRPSEKEILSARLIDRALRPLFPDGYLFETQIIVTVISSDQINDADVLGGLAASAAIMVSDIPFHNAMSEVRVGRINGKFIINPDVNELVNSDLDICIGGTTDTICMLEGEMKEISEAEMLDAIKFGHDAIRRLCALQNEIAAEVAKPARPFAPAVIPSELTDLVRGLCETRLRELAYTPLRKEDRAEQTAAIYREIIQSTVEHFKAAISPEEIQADPSKALCLNEHIIDEQIHAVEKKVMRHMILDDAKRLDGRTLEEVRPISIELGIIPRAHGSALFTRGETQALVTITLGTKKDAQSVDNLTNNADKKFMLHYNFPPFSVGETGRIGSTGRREIGHGNLAERAIKMVAPPEQEFPYTVRIVSDILESNGSSSMASVCGGTLALMDGGVPIRKPVSGIAMGLIKEGSNYAVLSDILGNEDHLGDMDFKVSGTRDGITACQMDIKIDGLDYHILESALEQARRGRLHILDKMEEAIPSARVELAQFAPRLTTIQVPVDAIGLIIGKGGETIRSITEETGAEINIEDDGTVTIACSSVEGTHAALATIKTLLAKPEVGTIYLGKVRDVRDELGAFVEFLPKTDGLVHISEISATERVAKVSDHLKIGDRIKVKLVDVRKDPRTGKTRFALSMRAVETDAANGAPQENNQENQ.

Positions 506 and 512 each coordinate Mg(2+). The KH domain occupies 573–632 (PRLTTIQVPVDAIGLIIGKGGETIRSITEETGAEINIEDDGTVTIACSSVEGTHAALATI). The S1 motif domain occupies 642 to 717 (GTIYLGKVRD…GKTRFALSMR (76 aa)).

The protein belongs to the polyribonucleotide nucleotidyltransferase family. Mg(2+) serves as cofactor.

Its subcellular location is the cytoplasm. It catalyses the reaction RNA(n+1) + phosphate = RNA(n) + a ribonucleoside 5'-diphosphate. In terms of biological role, involved in mRNA degradation. Catalyzes the phosphorolysis of single-stranded polyribonucleotides processively in the 3'- to 5'-direction. In Chlorobium limicola (strain DSM 245 / NBRC 103803 / 6330), this protein is Polyribonucleotide nucleotidyltransferase.